Reading from the N-terminus, the 675-residue chain is TOM1-like protein 9 (675 aa).

Positions 9–138 (ATSEMLIGPD…ELLRAGAVFP (130 aa)) constitute a VHS domain. Disordered stretches follow at residues 144-181 (SAPVFTPPQTQPLTSYPPNLRNAGPGNDVPEPSAEPEF), 270-322 (LPGT…QLAL), 371-524 (FSDN…YAQM), 542-561 (QNGVYMPNQPNQALGSGYQP), and 622-675 (RDQT…AGTM). Residues 180-268 (EFPTLSLSEI…VLTNYEAIAS (89 aa)) form the GAT domain. Polar residues-rich tracts occupy residues 299–317 (GDSSNQANGATSSSGNGVL) and 372–435 (SDNT…GQGV). Positions 436 to 451 (SSPWSSQPAQQPVQPS) are enriched in low complexity. 2 stretches are compositionally biased toward polar residues: residues 470–481 (QDYSPSAESGSP) and 488–524 (PTQTAFTHAQPVNNNNPYPQIPQTGPPVNNNSPYAQM). The span at 646–661 (NKPEDKLFGDLVDISK) shows a compositional bias: basic and acidic residues.

Belongs to the TOM1 family. Interacts with ELC/VPS23A and ELCL/VPS23B. In terms of tissue distribution, ubiquitously expressed.

The protein resides in the cytoplasm. Its subcellular location is the membrane. Functionally, might contribute to the loading of the ESCRT machinery. The protein is TOM1-like protein 9 of Arabidopsis thaliana (Mouse-ear cress).